Consider the following 182-residue polypeptide: Cytidylate kinase (182 aa).

An ATP-binding site is contributed by 7 to 15 (GLPGSGTTS).

It belongs to the cytidylate kinase family. Type 2 subfamily.

It localises to the cytoplasm. It carries out the reaction CMP + ATP = CDP + ADP. The catalysed reaction is dCMP + ATP = dCDP + ADP. The chain is Cytidylate kinase from Methanoregula boonei (strain DSM 21154 / JCM 14090 / 6A8).